We begin with the raw amino-acid sequence, 809 residues long: LPS-assembly protein LptD (809 aa).

The signal sequence occupies residues 1 to 22 (MRRALRLLPLPLSIAICLPAMA).

This sequence belongs to the LptD family. Component of the lipopolysaccharide transport and assembly complex. Interacts with LptE and LptA.

It localises to the cell outer membrane. In terms of biological role, together with LptE, is involved in the assembly of lipopolysaccharide (LPS) at the surface of the outer membrane. The protein is LPS-assembly protein LptD of Xanthomonas campestris pv. campestris (strain 8004).